Consider the following 374-residue polypeptide: Chaperone protein DnaJ (374 aa).

The J domain occupies 5-70; it reads DYYEVLGVER…NKRAAYDQYG (66 aa). A CR-type zinc finger spans residues 133–211; the sequence is GTSVNIRVPT…CHGEGRVEEY (79 aa). Residues Cys-146, Cys-149, Cys-163, Cys-166, Cys-185, Cys-188, Cys-199, and Cys-202 each coordinate Zn(2+). CXXCXGXG motif repeat units follow at residues 146–153, 163–170, 185–192, and 199–206; these read CKPCDGSG, CPTCGGIG, CPRCHGQG, and CDSCHGEG.

Belongs to the DnaJ family. Homodimer. It depends on Zn(2+) as a cofactor.

The protein localises to the cytoplasm. In terms of biological role, participates actively in the response to hyperosmotic and heat shock by preventing the aggregation of stress-denatured proteins and by disaggregating proteins, also in an autonomous, DnaK-independent fashion. Unfolded proteins bind initially to DnaJ; upon interaction with the DnaJ-bound protein, DnaK hydrolyzes its bound ATP, resulting in the formation of a stable complex. GrpE releases ADP from DnaK; ATP binding to DnaK triggers the release of the substrate protein, thus completing the reaction cycle. Several rounds of ATP-dependent interactions between DnaJ, DnaK and GrpE are required for fully efficient folding. Also involved, together with DnaK and GrpE, in the DNA replication of plasmids through activation of initiation proteins. In Pseudomonas fluorescens (strain SBW25), this protein is Chaperone protein DnaJ.